Here is a 239-residue protein sequence, read N- to C-terminus: Ribosomal RNA small subunit methyltransferase G (239 aa).

Residues G78, F83, 129-130, and R148 each bind S-adenosyl-L-methionine; that span reads AE.

This sequence belongs to the methyltransferase superfamily. RNA methyltransferase RsmG family.

The protein resides in the cytoplasm. Its function is as follows. Specifically methylates the N7 position of a guanine in 16S rRNA. The sequence is that of Ribosomal RNA small subunit methyltransferase G from Clostridium botulinum (strain 657 / Type Ba4).